The following is a 299-amino-acid chain: MTTDIVWPPPVRQVRAYRNIVVDGACNIRCTYCEVKKTKVDQPATIRSLDRIFAEYEPDAVLFRVESDGEITLYPKIVDHLQKRAAEGYRVEVLSNGTKLPRALEGRPDLLWVFSVDGHTEAMNAKRGLKQPQIDRILDAAVELGAELQTVYWGQPVEEVNAYIDLLESRGYRGLLHFMPLLAFKGRPLTVNLRYQDLHPADFLAPPEYFRRWNHIFETGRRDAVCDQITNGYNYQVSGDEIRMVKCDCYSVPKHLVHGFGPIREFDDWPCGTCIANQEFNNSRERMRVPQGRIPLPLV.

The region spanning 10-222 is the Radical SAM core domain; it reads PVRQVRAYRN…WNHIFETGRR (213 aa). 5 residues coordinate [4Fe-4S] cluster: Cys-26, Cys-30, Cys-33, Cys-226, and Cys-247. The active-site Proton donor is Cys-249. The [4Fe-4S] cluster site is built by Cys-271 and Cys-274.

This sequence belongs to the radical SAM superfamily. [4Fe-4S] cluster serves as cofactor.

The enzyme catalyses neomycin C + AH2 + S-adenosyl-L-methionine = neomycin B + 5'-deoxyadenosine + L-methionine + A + H(+). It participates in antibiotic biosynthesis; neomycin biosynthesis. In terms of biological role, catalyzes the last step of neomycin B biosynthesis, i.e. the irreversible epimerization at C-5''' of neomycin C to give neomycin B. To a lesser extent, is also able to convert neomycin Y2 to neomycin Y1. This Streptomyces fradiae (Streptomyces roseoflavus) protein is Neomycin C epimerase.